The chain runs to 278 residues: Undecaprenyl-diphosphatase (278 aa).

8 helical membrane passes run 3–23, 42–62, 88–108, 112–132, 152–172, 190–210, 225–245, and 253–273; these read YILI…IPIS, VAYS…IIYF, FLVI…LFVI, ILGL…IIIY, IIIV…RSGI, LSFI…VLFS, GLLI…NALL, and VVVL…LSGI.

This sequence belongs to the UppP family.

It is found in the cell membrane. The enzyme catalyses di-trans,octa-cis-undecaprenyl diphosphate + H2O = di-trans,octa-cis-undecaprenyl phosphate + phosphate + H(+). Functionally, catalyzes the dephosphorylation of undecaprenyl diphosphate (UPP). The protein is Undecaprenyl-diphosphatase of Saccharolobus islandicus (strain M.14.25 / Kamchatka #1) (Sulfolobus islandicus).